Here is a 2602-residue protein sequence, read N- to C-terminus: Filamin-B (2602 aa).

An actin-binding region spans residues 1-239 (MPVTEKDLAE…VMTYLSQFPK (239 aa)). Calponin-homology (CH) domains lie at 16 to 122 (KIQQ…LHYS) and 139 to 242 (QTPK…KAKL). The residue at position 216 (Thr-216) is a Phosphothreonine. The interval 244–267 (PGAPLKPKLNPKKARAYGRGIEPT) is disordered. Filamin repeat units follow at residues 249-347 (KPKL…EVSV), 349-446 (KAQG…VVQV), 447-543 (GEAC…EVQV), 544-636 (GPEA…MAFI), 640-736 (TGGY…RVNI), 737-839 (GQGS…RVKV), 840-938 (DPSH…TVGV), 939-1034 (AAPL…TVEA), 1035-1127 (SLPP…KADI), 1128-1222 (EMPF…RVKV), 1223-1322 (EPAV…KVAV), 1323-1415 (TEGC…RVPV), 1416-1511 (KDVV…KVKV), 1512-1608 (LPTY…RIRA), and 1609-1704 (TQTG…TVMA). Phosphothreonine is present on Thr-519. The residue at position 681 (Lys-681) is an N6-acetyllysine. The residue at position 730 (Ser-730) is a Phosphoserine. A phosphoserine mark is found at Ser-886, Ser-932, Ser-983, and Ser-1028. Residues 1128 to 1511 (EMPFDPSKVV…IPRSPFKVKV (384 aa)) are interaction with FBLP1. Thr-1307 carries the phosphothreonine modification. Phosphoserine is present on Ser-1316. Phosphoserine is present on residues Ser-1433, Asn-1474, Ser-1505, and Ser-1602. Residues 1705–1728 (TDGEVTAVEEAPVNACPPGFRPWV) are hinge 1. Filamin repeat units follow at residues 1729 to 1813 (TEEA…SPLQ), 1816 to 1908 (VNYP…TAKI), 1919 to 1994 (KLGS…SIMV), 1997 to 2089 (SEIG…TVKI), 2091 to 2185 (GEGR…QFTV), 2188 to 2280 (LGEG…LVPV), 2282 to 2375 (APSD…KVRV), and 2379 to 2471 (GQAG…KAKV). An N6-acetyllysine modification is found at Lys-1780. Residues 1862-2148 (SKAEISCIDN…RVTEAEIVPM (287 aa)) form an interaction with the cytoplasmic tail of GP1BA region. Residues 2060–2225 (SYFPTVPGVY…IWTREAGAGG (166 aa)) form an interaction with FLNA 1 region. Ser-2083, Ser-2107, and Ser-2113 each carry phosphoserine. The interval 2130 to 2602 (SAHVTSPSGR…PGSPFHVTVP (473 aa)) is interaction with INPPL1. 2 positions are modified to phosphoserine: Ser-2369 and Ser-2465. A Glycyl lysine isopeptide (Lys-Gly) (interchain with G-Cter in ISG15) cross-link involves residue Lys-2468. Residues 2472–2506 (TGQRLVSPGSANETSSILVESVTRSSTETCYSAIP) form a hinge 2 region. The self-association site, tail stretch occupies residues 2472–2602 (TGQRLVSPGS…PGSPFHVTVP (131 aa)). A phosphoserine mark is found at Ser-2478, Ser-2481, and Ser-2492. Residues 2507–2601 (KASSDASKVT…IPGSPFHVTV (95 aa)) form a Filamin 24 repeat. The tract at residues 2507 to 2602 (KASSDASKVT…PGSPFHVTVP (96 aa)) is interaction with FLNA 2. 2 positions are modified to N6-succinyllysine: Lys-2518 and Lys-2524. An N6-acetyllysine modification is found at Lys-2576.

Belongs to the filamin family. As to quaternary structure, homodimer. Interacts with MICALL2. Interacts with RFLNA and RFLNB. Isoform 1 interacts with FBLP1, FLNA, FLNC, GP1BA, INPPL1, ITGB1A, PSEN1 and PSEN2. Isoform 3 interacts with ITGB1A, ITGB1D, ITGB3 and ITGB6. Interacts with MYOT and MYOZ1. Interacts with HBV capsid protein. Interacts with ASB2 isoform 1; the interaction targets FLNB for proteasomal degradation. ISGylation prevents ability to interact with the upstream activators of the JNK cascade and inhibits IFNA-induced JNK signaling. In terms of processing, ubiquitination by a SCF-like complex containing ASB2 isoform 1 leads to proteasomal degradation which promotes muscle differentiation. As to expression, ubiquitous. Isoform 1 and isoform 2 are expressed in placenta, bone marrow, brain, umbilical vein endothelial cells (HUVEC), retina and skeletal muscle. Isoform 1 is predominantly expressed in prostate, uterus, liver, thyroid, stomach, lymph node, small intestine, spleen, skeletal muscle, kidney, placenta, pancreas, heart, lung, platelets, endothelial cells, megakaryocytic and erythroleukemic cell lines. Isoform 2 is predominantly expressed in spinal cord, platelet and Daudi cells. Also expressed in thyroid adenoma, neurofibrillary tangles (NFT), senile plaques in the hippocampus and cerebral cortex in Alzheimer disease (AD). Isoform 3 and isoform 6 are expressed predominantly in lung, heart, skeletal muscle, testis, spleen, thymus and leukocytes. Isoform 4 and isoform 5 are expressed in heart.

The protein resides in the cytoplasm. It is found in the cell cortex. The protein localises to the cytoskeleton. It localises to the stress fiber. Its subcellular location is the myofibril. The protein resides in the sarcomere. It is found in the z line. Functionally, connects cell membrane constituents to the actin cytoskeleton. May promote orthogonal branching of actin filaments and links actin filaments to membrane glycoproteins. Anchors various transmembrane proteins to the actin cytoskeleton. Interaction with FLNA may allow neuroblast migration from the ventricular zone into the cortical plate. Various interactions and localizations of isoforms affect myotube morphology and myogenesis. Isoform 6 accelerates muscle differentiation in vitro. This Homo sapiens (Human) protein is Filamin-B (FLNB).